A 1178-amino-acid polypeptide reads, in one-letter code: Phosphate system positive regulatory protein PHO81 (1178 aa).

In terms of domain architecture, SPX spans 1 to 169 (MKFGKYLEAR…QSHDKDFYLA (169 aa)). The disordered stretch occupies residues 210–250 (QSSTFTNDDDDDNNTSNNNKHNNNNNNNNNNNNNNNNNNIL). The span at 223–250 (NTSNNNKHNNNNNNNNNNNNNNNNNNIL) shows a compositional bias: low complexity. ANK repeat units follow at residues 423–452 (HSRV…LEDV), 458–487 (DSKT…ANAS), 506–535 (VQFD…KQNA), 556–586 (TGLC…DPNE), 591–620 (NKWT…RLDI), and 624–653 (NGHS…NLPS). A GP-PDE domain is found at 871-1178 (IINYEPYWKS…ELLFENNIDM (308 aa)). Serine 956 bears the Phosphoserine mark.

Associates specifically with the PHO80-PHO85 and PCL7-PHO85 cyclin-CDK complexes, and much of this interaction is mediated through the PHO80 and PCL7 cyclin subunits. Interacts with the transcription factor PHO4. In terms of processing, phosphorylated by the cyclin-CDK PHO80-PHO85. Phosphorylation mediates the formation of a stable interaction with the cyclin-CDK and is required for function as an active inhibitor of the complex under phosphate starvation conditions.

The protein resides in the cytoplasm. It is found in the nucleus. Inhibits the kinase activity of the cyclin-CDKs PHO80-PHO85 and PCL7-PHO85 under low-phosphate conditions. This is Phosphate system positive regulatory protein PHO81 (PHO81) from Saccharomyces cerevisiae (strain ATCC 204508 / S288c) (Baker's yeast).